The chain runs to 186 residues: MSPGLQKGSRLMENRSPPSSFSIEHILGLDKKTEVASSPIIKHHRPWIQCNSEGVDGTFWHIPVISCDLPVQVHALRRSMGEETQVRLEKCCGEEDRLTYKRELSWYRGRRPRTAFTRSQIEILENVFRVNSYPGIDIREELAGKLALDEDRIQIWFQNRRAKLKRSHRESQFLMVKDSLSSKIQE.

Residues 109 to 168 constitute a DNA-binding region (homeobox); it reads GRRPRTAFTRSQIEILENVFRVNSYPGIDIREELAGKLALDEDRIQIWFQNRRAKLKRSH.

This sequence belongs to the ANF homeobox family. As to quaternary structure, interacts (via N-terminus) with zyx.

Its subcellular location is the nucleus. Regulates the earliest stages of development of the anterior neural plate. Plays a role in forebrain development by inhibiting the expression of otx2 and pax6 in the rostral region of the anterior neural plate. Necessary for both neural differentiation and neural patterning. Controls Spemann organizer development. May act as a transcriptional repressor. This Xenopus tropicalis (Western clawed frog) protein is Homeobox expressed in ES cells 1.